Here is a 345-residue protein sequence, read N- to C-terminus: Tryptophan--tRNA ligase (345 aa).

ATP contacts are provided by residues 21-23 (QPT) and 30-31 (GN). The 'HIGH' region signature appears at 22–31 (PTADSYHLGN). Aspartate 147 serves as a coordination point for L-tryptophan. Residues 159-161 (GED), isoleucine 198, and 207-211 (KMSKS) each bind ATP. A 'KMSKS' region motif is present at residues 207–211 (KMSKS).

It belongs to the class-I aminoacyl-tRNA synthetase family. In terms of assembly, homodimer.

It is found in the cytoplasm. It catalyses the reaction tRNA(Trp) + L-tryptophan + ATP = L-tryptophyl-tRNA(Trp) + AMP + diphosphate + H(+). In terms of biological role, catalyzes the attachment of tryptophan to tRNA(Trp). The sequence is that of Tryptophan--tRNA ligase from Corynebacterium glutamicum (strain ATCC 13032 / DSM 20300 / JCM 1318 / BCRC 11384 / CCUG 27702 / LMG 3730 / NBRC 12168 / NCIMB 10025 / NRRL B-2784 / 534).